Consider the following 466-residue polypeptide: Metaxin-1 (466 aa).

The span at 1-19 (MLLGGPPRSPRSGTSPKGP) shows a compositional bias: low complexity. Residues 1 to 133 (MLLGGPPRSP…AVAGGGPRQG (133 aa)) are disordered. A compositionally biased stretch (polar residues) spans 20–36 (WSSTGHVQFGKSPQTWP). Over residues 90-110 (ARGPVPRSSAASRARRSLASP) the composition is skewed to low complexity. Glycyl lysine isopeptide (Lys-Gly) (interchain with G-Cter in ubiquitin) cross-links involve residues lysine 187, lysine 190, lysine 227, and lysine 317. A helical membrane pass occupies residues 421-441 (ILSVLAGLAAMVGYALLSGIV).

Belongs to the metaxin family. Interacts with MTX2/metaxin-2. Associates with the mitochondrial contact site and cristae organizing system (MICOS) complex, composed of at least MICOS10/MIC10, CHCHD3/MIC19, CHCHD6/MIC25, APOOL/MIC27, IMMT/MIC60, APOO/MIC23/MIC26 and QIL1/MIC13. This complex was also known under the names MINOS or MitOS complex. The MICOS complex associates with mitochondrial outer membrane proteins SAMM50, MTX1 and MTX2 (together described as components of the mitochondrial outer membrane sorting assembly machinery (SAM) complex) and DNAJC11, mitochondrial inner membrane protein TMEM11 and with HSPA9. The MICOS and SAM complexes together with DNAJC11 are part of a large protein complex spanning both membranes termed the mitochondrial intermembrane space bridging (MIB) complex. Interacts with ARMC1. Ubiquitinated by PRKN during mitophagy, leading to its degradation and enhancement of mitophagy. Deubiquitinated by USP30.

The protein localises to the membrane. It is found in the mitochondrion outer membrane. Functionally, involved in transport of proteins into the mitochondrion. Essential for embryonic development. This Homo sapiens (Human) protein is Metaxin-1 (MTX1).